The chain runs to 247 residues: 2,3-bisphosphoglycerate-dependent phosphoglycerate mutase (247 aa).

Substrate is bound by residues Arg8 to Asn15, Thr21 to Gly22, Arg60, Glu87 to Tyr90, Lys98, Arg114 to Arg115, and Gly183 to Asn184. His9 acts as the Tele-phosphohistidine intermediate in catalysis. Glu87 functions as the Proton donor/acceptor in the catalytic mechanism.

Belongs to the phosphoglycerate mutase family. BPG-dependent PGAM subfamily.

The catalysed reaction is (2R)-2-phosphoglycerate = (2R)-3-phosphoglycerate. Its pathway is carbohydrate degradation; glycolysis; pyruvate from D-glyceraldehyde 3-phosphate: step 3/5. Functionally, catalyzes the interconversion of 2-phosphoglycerate and 3-phosphoglycerate. This chain is 2,3-bisphosphoglycerate-dependent phosphoglycerate mutase, found in Chlorobaculum tepidum (strain ATCC 49652 / DSM 12025 / NBRC 103806 / TLS) (Chlorobium tepidum).